The sequence spans 168 residues: MPTLLLGAAIPFGTIAYTLFIFLILLVMLRKFAWGPLMGIMKEREEHVTNEIDAAERSNAEAKKLVEEQREMLKQSRVEAQELIERAKKQAVDQKDVIVAAAKEEAESIKASAVQEIQREKEQAIAALQEQVASLSVQIASKVIEKELKEEDQVKLIRDYIKEVGEAR.

Residues 9-29 traverse the membrane as a helical segment; sequence AIPFGTIAYTLFIFLILLVML.

This sequence belongs to the ATPase B chain family. As to quaternary structure, F-type ATPases have 2 components, F(1) - the catalytic core - and F(0) - the membrane proton channel. F(1) has five subunits: alpha(3), beta(3), gamma(1), delta(1), epsilon(1). F(0) has three main subunits: a(1), b(2) and c(10-14). The alpha and beta chains form an alternating ring which encloses part of the gamma chain. F(1) is attached to F(0) by a central stalk formed by the gamma and epsilon chains, while a peripheral stalk is formed by the delta and b chains.

It is found in the cell membrane. In terms of biological role, f(1)F(0) ATP synthase produces ATP from ADP in the presence of a proton or sodium gradient. F-type ATPases consist of two structural domains, F(1) containing the extramembraneous catalytic core and F(0) containing the membrane proton channel, linked together by a central stalk and a peripheral stalk. During catalysis, ATP synthesis in the catalytic domain of F(1) is coupled via a rotary mechanism of the central stalk subunits to proton translocation. Component of the F(0) channel, it forms part of the peripheral stalk, linking F(1) to F(0). This chain is ATP synthase subunit b, found in Bacillus cereus (strain G9842).